The following is a 57-amino-acid chain: uncharacterized protein (57 aa).

A disordered region spans residues M1–V57. Polar residues predominate over residues H23–V57.

This is an uncharacterized protein from Ornithodoros (relapsing fever ticks).